Reading from the N-terminus, the 159-residue chain is NAD(P)H-quinone oxidoreductase subunit J, chloroplastic (159 aa).

The protein belongs to the complex I 30 kDa subunit family. In terms of assembly, NDH is composed of at least 16 different subunits, 5 of which are encoded in the nucleus.

The protein localises to the plastid. The protein resides in the chloroplast thylakoid membrane. It carries out the reaction a plastoquinone + NADH + (n+1) H(+)(in) = a plastoquinol + NAD(+) + n H(+)(out). The catalysed reaction is a plastoquinone + NADPH + (n+1) H(+)(in) = a plastoquinol + NADP(+) + n H(+)(out). NDH shuttles electrons from NAD(P)H:plastoquinone, via FMN and iron-sulfur (Fe-S) centers, to quinones in the photosynthetic chain and possibly in a chloroplast respiratory chain. The immediate electron acceptor for the enzyme in this species is believed to be plastoquinone. Couples the redox reaction to proton translocation, and thus conserves the redox energy in a proton gradient. The sequence is that of NAD(P)H-quinone oxidoreductase subunit J, chloroplastic from Brachypodium distachyon (Purple false brome).